A 251-amino-acid polypeptide reads, in one-letter code: HTH-type transcriptional regulator UlaR (251 aa).

The HTH deoR-type domain maps to Glu3–Ala58. Residues Val20–Asp39 constitute a DNA-binding region (H-T-H motif).

The protein localises to the cytoplasm. In terms of biological role, represses ulaG and the ulaABCDEF operon. This chain is HTH-type transcriptional regulator UlaR, found in Shigella dysenteriae serotype 1 (strain Sd197).